Here is a 255-residue protein sequence, read N- to C-terminus: F-box/SPRY domain-containing protein 1 (255 aa).

An F-box domain is found at 3 to 51; the sequence is DPVAALCNYNVLEVIFSYLELEDLNHCSQVCKSWYHFLNDENSDVWRWH. One can recognise a B30.2/SPRY domain in the interval 61 to 253; sequence LKSDLLASVS…VSMVYLGTPL (193 aa).

This sequence belongs to the FBXO45/Fsn family. Component of an E3 ubiquitin ligase complex composed of hiw and Fsn.

The protein resides in the synapse. It participates in protein modification; protein ubiquitination. In terms of biological role, required in the presynaptic motoneuron to down-regulate the levels of wnd and restrain synaptic terminal growth at the neuromuscular junction (NMJ). The protein is F-box/SPRY domain-containing protein 1 of Drosophila yakuba (Fruit fly).